A 971-amino-acid polypeptide reads, in one-letter code: Exportin-2 (971 aa).

Met-1 bears the N-acetylmethionine mark. Positions 29–102 (AEKFLESVEG…KANIVHLMLS (74 aa)) constitute an Importin N-terminal domain. Ser-112 bears the Phosphoserine mark. Residues Lys-574 and Lys-824 each carry the N6-acetyllysine modification. At Ser-931 the chain carries Phosphoserine.

Belongs to the XPO2/CSE1 family. As to quaternary structure, found in a complex with CSE1L/XPO2, Ran and KPNA2. Binds with high affinity to importin-alpha only in the presence of RanGTP. The complex is dissociated by the combined action of RanBP1 and RanGAP1. Interacts with CFTR.

It localises to the cytoplasm. It is found in the nucleus. Export receptor for importin-alpha. Mediates importin-alpha re-export from the nucleus to the cytoplasm after import substrates (cargos) have been released into the nucleoplasm. In the nucleus binds cooperatively to importin-alpha and to the GTPase Ran in its active GTP-bound form. Docking of this trimeric complex to the nuclear pore complex (NPC) is mediated through binding to nucleoporins. Upon transit of a nuclear export complex into the cytoplasm, disassembling of the complex and hydrolysis of Ran-GTP to Ran-GDP (induced by RANBP1 and RANGAP1, respectively) cause release of the importin-alpha from the export receptor. CSE1L/XPO2 then return to the nuclear compartment and mediate another round of transport. The directionality of nuclear export is thought to be conferred by an asymmetric distribution of the GTP- and GDP-bound forms of Ran between the cytoplasm and nucleus. In Pongo abelii (Sumatran orangutan), this protein is Exportin-2 (CSE1L).